A 603-amino-acid chain; its full sequence is Elongation factor 4 (603 aa).

The tr-type G domain maps to 7–189 (SHIRNFSIIA…SIVHLVPPPR (183 aa)). GTP is bound by residues 19-24 (DHGKST) and 136-139 (NKID).

The protein belongs to the TRAFAC class translation factor GTPase superfamily. Classic translation factor GTPase family. LepA subfamily.

The protein localises to the cell inner membrane. It catalyses the reaction GTP + H2O = GDP + phosphate + H(+). Its function is as follows. Required for accurate and efficient protein synthesis under certain stress conditions. May act as a fidelity factor of the translation reaction, by catalyzing a one-codon backward translocation of tRNAs on improperly translocated ribosomes. Back-translocation proceeds from a post-translocation (POST) complex to a pre-translocation (PRE) complex, thus giving elongation factor G a second chance to translocate the tRNAs correctly. Binds to ribosomes in a GTP-dependent manner. This chain is Elongation factor 4, found in Thermosynechococcus vestitus (strain NIES-2133 / IAM M-273 / BP-1).